The chain runs to 321 residues: uncharacterized protein (321 aa).

The tract at residues 1–80 is disordered; it reads MQGGQEVGRE…GELSGGWGEF (80 aa).

This is an uncharacterized protein from Mus musculus (Mouse).